The following is a 408-amino-acid chain: MSPSESDDAINWKRNLIVAWLGCFLTGAAFSLVMPFLPLYVEELGVTGHSALNLWSGIVFSITFLFSAIASPFWGGLADRKGRKIMLLRSALGMGIVMILMGMAQNIWQFLILRALLGLLGGFVPNANALIATQVPRNKSGWALGTLSTGGVSGALLGPLAGGLLADHYGLRPVFFITASVLMLCFVVTLLCIKEKFQPVSKKEMLHVREVVFSLKNPRLVLSLFVTTMIIQIASGSIAPILTLYVRELAGNVGNIAFISGMIASVPGVAALLSAPRLGKLGDRIGPDKILIAALIFSVLLLIPMSFVQTPWQLGILRFLLGAADGALLPAVQTLLVYNSSNQIAGRIFSYNQSFRDIGNVTGPLMGAAISANYGFRAVFLVTACVVLFNIIYSWNSLRRRREPQVLG.

11 helical membrane-spanning segments follow: residues 16 to 36 (LIVA…VMPF), 58 to 78 (IVFS…GGLA), 92 to 112 (LGMG…QFLI), 115 to 135 (ALLG…ATQV), 146 to 166 (TLST…GLLA), 173 to 193 (PVFF…LLCI), 224 to 244 (LFVT…ILTL), 253 to 273 (VGNI…AALL), 290 to 310 (ILIA…FVQT), 319 to 339 (FLLG…LVYN), and 378 to 398 (AVFL…WNSL).

The protein belongs to the major facilitator superfamily. DHA1 family. MdtG (TC 2.A.1.2.20) subfamily.

It is found in the cell inner membrane. In terms of biological role, confers resistance to fosfomycin and deoxycholate. The chain is Multidrug resistance protein MdtG from Escherichia fergusonii (strain ATCC 35469 / DSM 13698 / CCUG 18766 / IAM 14443 / JCM 21226 / LMG 7866 / NBRC 102419 / NCTC 12128 / CDC 0568-73).